The primary structure comprises 136 residues: Putative LysR family substrate binding domain-containing protein YagP (136 aa).

Belongs to the LysR transcriptional regulatory family.

This Escherichia coli (strain K12) protein is Putative LysR family substrate binding domain-containing protein YagP (yagP).